Reading from the N-terminus, the 1039-residue chain is Probable inorganic carbon transporter subunit DabA 1 (1039 aa).

4 residues coordinate Zn(2+): Cys-462, Asp-464, His-721, and Cys-736.

This sequence belongs to the inorganic carbon transporter (TC 9.A.2) DabA family. In terms of assembly, forms a complex with DabB. Zn(2+) serves as cofactor.

The protein localises to the cell inner membrane. Functionally, part of an energy-coupled inorganic carbon pump. The polypeptide is Probable inorganic carbon transporter subunit DabA 1 (Nitrobacter hamburgensis (strain DSM 10229 / NCIMB 13809 / X14)).